A 526-amino-acid chain; its full sequence is Efflux pump aunC (526 aa).

The next 14 helical transmembrane spans lie at 23–43 (LCYK…CTSL), 64–84 (DVGW…LPFG), 89–109 (FFPI…GSFI), 125–145 (VAGL…TQCV), 155–175 (GFIM…GGAF), 183–203 (WCFY…FFTF), 218–238 (AAGL…CLLL), 254–274 (IIAL…LQLW), 296–316 (LYGF…PIWF), 339–359 (VIFA…GPFM), 360–380 (LLSA…HPSS), 386–406 (IGYQ…PVFV), 418–438 (TATA…VSVA), and 491–511 (VHTF…ATVI).

The protein belongs to the major facilitator superfamily. TCR/Tet family.

It localises to the cell membrane. Efflux pump; part of the gene cluster that mediates the biosynthesis of aurasperone B, a dimeric gamma-naphthopyrone. The sequence is that of Efflux pump aunC from Aspergillus niger (strain ATCC 1015 / CBS 113.46 / FGSC A1144 / LSHB Ac4 / NCTC 3858a / NRRL 328 / USDA 3528.7).